We begin with the raw amino-acid sequence, 217 residues long: Peptide methionine sulfoxide reductase MsrA (217 aa).

The disordered stretch occupies residues 16 to 39 (EALKGGRHPVLESPQPHTVLGTPI). The active site involves Cys56.

It belongs to the MsrA Met sulfoxide reductase family.

The catalysed reaction is L-methionyl-[protein] + [thioredoxin]-disulfide + H2O = L-methionyl-(S)-S-oxide-[protein] + [thioredoxin]-dithiol. The enzyme catalyses [thioredoxin]-disulfide + L-methionine + H2O = L-methionine (S)-S-oxide + [thioredoxin]-dithiol. Its function is as follows. Has an important function as a repair enzyme for proteins that have been inactivated by oxidation. Catalyzes the reversible oxidation-reduction of methionine sulfoxide in proteins to methionine. The polypeptide is Peptide methionine sulfoxide reductase MsrA (Corynebacterium efficiens (strain DSM 44549 / YS-314 / AJ 12310 / JCM 11189 / NBRC 100395)).